The following is a 964-amino-acid chain: uncharacterized protein (964 aa).

2 disordered regions span residues 1 to 31 (MDSE…SDCE) and 169 to 199 (EETY…DEIS). The segment covering 10 to 27 (HSICNSVSSGENYKSPES) has biased composition (polar residues). Residues 656–840 (EVMESLQVEI…LILNQTSMAK (185 aa)) adopt a coiled-coil conformation.

This is an uncharacterized protein from Caenorhabditis elegans.